Consider the following 186-residue polypeptide: Peptidyl-tRNA hydrolase (186 aa).

H19 acts as the Proton acceptor in catalysis. TRNA contacts are provided by F64, N66, and N112.

The protein belongs to the PTH family. Monomer.

It is found in the cytoplasm. It catalyses the reaction an N-acyl-L-alpha-aminoacyl-tRNA + H2O = an N-acyl-L-amino acid + a tRNA + H(+). Its function is as follows. Hydrolyzes ribosome-free peptidyl-tRNAs (with 1 or more amino acids incorporated), which drop off the ribosome during protein synthesis, or as a result of ribosome stalling. In terms of biological role, catalyzes the release of premature peptidyl moieties from peptidyl-tRNA molecules trapped in stalled 50S ribosomal subunits, and thus maintains levels of free tRNAs and 50S ribosomes. This Pelagibacter ubique (strain HTCC1062) protein is Peptidyl-tRNA hydrolase.